The chain runs to 343 residues: Protein RecA (343 aa).

64–71 (GPESSGKT) lines the ATP pocket.

Belongs to the RecA family.

It is found in the cytoplasm. Its function is as follows. Can catalyze the hydrolysis of ATP in the presence of single-stranded DNA, the ATP-dependent uptake of single-stranded DNA by duplex DNA, and the ATP-dependent hybridization of homologous single-stranded DNAs. It interacts with LexA causing its activation and leading to its autocatalytic cleavage. The chain is Protein RecA from Bacillus cereus (strain ATCC 14579 / DSM 31 / CCUG 7414 / JCM 2152 / NBRC 15305 / NCIMB 9373 / NCTC 2599 / NRRL B-3711).